A 368-amino-acid chain; its full sequence is Probable endopolygalacturonase I (368 aa).

A signal peptide spans 1-18 (MHSFQLLGLAALGSLVAA). Positions 19 to 31 (APSPSRVSDLTER) are excised as a propeptide. A disulfide bridge connects residues Cys-35 and Cys-50. PbH1 repeat units follow at residues 162–192 (ANNL…DISE), 193–214 (SNGV…AINS), 215–235 (GKNI…SIGS), 244–265 (VQGV…RIKT), 273–295 (VSDV…VIQQ), and 307–328 (SNGI…DSKA). Asp-207 acts as the Proton donor in catalysis. Cysteines 209 and 225 form a disulfide. His-229 is an active-site residue. Cystine bridges form between Cys-335–Cys-340 and Cys-359–Cys-368.

The protein belongs to the glycosyl hydrolase 28 family.

The protein localises to the secreted. It catalyses the reaction (1,4-alpha-D-galacturonosyl)n+m + H2O = (1,4-alpha-D-galacturonosyl)n + (1,4-alpha-D-galacturonosyl)m.. Functionally, involved in maceration and soft-rotting of plant tissue. Hydrolyzes the 1,4-alpha glycosidic bonds of de-esterified pectate in the smooth region of the plant cell wall. The chain is Probable endopolygalacturonase I (pgaI) from Aspergillus terreus (strain NIH 2624 / FGSC A1156).